The sequence spans 430 residues: Corticosteroid-binding globulin (430 aa).

The N-terminal stretch at 1 to 22 (MLLTLYTCLLWLSTSGLWTIQA) is a signal peptide. Residues asparagine 119, asparagine 175, and asparagine 243 are each glycosylated (N-linked (GlcNAc...) asparagine). Glutamine 253 is a cortisol binding site. Asparagine 259 is a glycosylation site (N-linked (GlcNAc...) asparagine). Residue glutamine 285 coordinates cortisol. N-linked (GlcNAc...) asparagine glycosylation is present at asparagine 326. Tryptophan 392 contacts cortisol.

Belongs to the serpin family. As to expression, expressed by the liver; secreted in plasma.

The protein resides in the secreted. Major transport protein for glucocorticoids and progestins in the blood of almost all vertebrate species. This Ovis aries (Sheep) protein is Corticosteroid-binding globulin (SERPINA6).